A 240-amino-acid polypeptide reads, in one-letter code: UDP-2,3-diacylglucosamine hydrolase (240 aa).

Asp-8, His-10, Asp-41, Asn-79, and His-114 together coordinate Mn(2+). 79 to 80 (NR) provides a ligand contact to substrate. 5 residues coordinate substrate: Asp-122, Ser-160, Asn-164, Lys-167, and His-195. Mn(2+)-binding residues include His-195 and His-197.

The protein belongs to the LpxH family. It depends on Mn(2+) as a cofactor.

The protein resides in the cell inner membrane. It catalyses the reaction UDP-2-N,3-O-bis[(3R)-3-hydroxytetradecanoyl]-alpha-D-glucosamine + H2O = 2-N,3-O-bis[(3R)-3-hydroxytetradecanoyl]-alpha-D-glucosaminyl 1-phosphate + UMP + 2 H(+). Its pathway is glycolipid biosynthesis; lipid IV(A) biosynthesis; lipid IV(A) from (3R)-3-hydroxytetradecanoyl-[acyl-carrier-protein] and UDP-N-acetyl-alpha-D-glucosamine: step 4/6. Hydrolyzes the pyrophosphate bond of UDP-2,3-diacylglucosamine to yield 2,3-diacylglucosamine 1-phosphate (lipid X) and UMP by catalyzing the attack of water at the alpha-P atom. Involved in the biosynthesis of lipid A, a phosphorylated glycolipid that anchors the lipopolysaccharide to the outer membrane of the cell. The polypeptide is UDP-2,3-diacylglucosamine hydrolase (Klebsiella pneumoniae subsp. pneumoniae (strain ATCC 700721 / MGH 78578)).